The chain runs to 301 residues: Ribosomal RNA small subunit methyltransferase H (301 aa).

S-adenosyl-L-methionine is bound by residues 25–27 (GGH), aspartate 45, phenylalanine 72, aspartate 94, and glutamine 101.

The protein belongs to the methyltransferase superfamily. RsmH family.

It is found in the cytoplasm. It carries out the reaction cytidine(1402) in 16S rRNA + S-adenosyl-L-methionine = N(4)-methylcytidine(1402) in 16S rRNA + S-adenosyl-L-homocysteine + H(+). Functionally, specifically methylates the N4 position of cytidine in position 1402 (C1402) of 16S rRNA. The sequence is that of Ribosomal RNA small subunit methyltransferase H from Methylococcus capsulatus (strain ATCC 33009 / NCIMB 11132 / Bath).